A 260-amino-acid chain; its full sequence is Hemin import ATP-binding protein HmuV (260 aa).

Positions 7–243 constitute an ABC transporter domain; sequence IQASNISVTF…ERIEQVYGYS (237 aa). 39–46 contributes to the ATP binding site; the sequence is GPNGAGKS.

It belongs to the ABC transporter superfamily. Heme (hemin) importer (TC 3.A.1.14.5) family. In terms of assembly, the complex is composed of two ATP-binding proteins (HmuV), two transmembrane proteins (HmuU) and a solute-binding protein (HmuT).

It localises to the cell inner membrane. Part of the ABC transporter complex HmuTUV involved in hemin import. Responsible for energy coupling to the transport system. The sequence is that of Hemin import ATP-binding protein HmuV from Vibrio anguillarum (strain ATCC 68554 / 775) (Listonella anguillarum).